The sequence spans 128 residues: uncharacterized protein (128 aa).

This is an uncharacterized protein from Haemophilus influenzae (strain ATCC 51907 / DSM 11121 / KW20 / Rd).